The sequence spans 577 residues: Vacuolar membrane amino acid uptake transporter fnx2 (577 aa).

Positions 1–14 are enriched in polar residues; the sequence is MSNPRTKSPNTNRG. The segment at 1–80 is disordered; sequence MSNPRTKSPN…SPHRQDAATT (80 aa). Low complexity predominate over residues 22–39; it reads SALLNDSLSSLNGNSSYD. The segment covering 40 to 62 has biased composition (basic and acidic residues); sequence SIKDSSKNNKDVAEVNEYPRRPE. Transmembrane regions (helical) follow at residues 91-111, 123-145, 157-177, 186-206, 217-237, 244-264, 286-306, 317-337, 356-376, 391-411, 418-438, 448-468, 490-510, and 547-567; these read VLPALLLGVVLAALDNTIVAS, FSQVSWTATAYMISCTAFQPLFG, LLAAYCVFGIGCFLCGTSRSL, IAGIGGGGMNSTVSILMSDIV, IINVFFAIGSSLGGPVGGYFA, IGFLIQVPLIAIAFLCVYFTL, LILLIIGVTTMTCAFTLGGNV, LLIASSISYLSFVYVEAFVAF, LCNFFHSVANFGWIYGMPLFF, LIPMIIGSSLGSLLGGAVISL, ITVGSYFFGSVAALFMLRYGY, YPFSGGLGNGIAVTTTLVAII, GCVLGVSISSSIVQTVLGIKL, and LLGSIHYSFLFVSFMFFCAFV.

It belongs to the major facilitator superfamily.

The protein resides in the vacuole. It localises to the membrane. Functionally, MFS-type transporter involved in vacuolar amino acid uptake. This is Vacuolar membrane amino acid uptake transporter fnx2 (fnx2) from Schizosaccharomyces pombe (strain 972 / ATCC 24843) (Fission yeast).